A 208-amino-acid polypeptide reads, in one-letter code: Large ribosomal subunit protein eL13 (208 aa).

2 positions are modified to phosphoserine: S177 and S180.

This sequence belongs to the eukaryotic ribosomal protein eL13 family. As to quaternary structure, component of the large ribosomal subunit (LSU). Mature yeast ribosomes consist of a small (40S) and a large (60S) subunit. The 40S small subunit contains 1 molecule of ribosomal RNA (18S rRNA) and at least 33 different proteins. The large 60S subunit contains 3 rRNA molecules (25S, 5.8S and 5S rRNA) and at least 46 different proteins.

Its subcellular location is the cytoplasm. Its function is as follows. Component of the ribosome, a large ribonucleoprotein complex responsible for the synthesis of proteins in the cell. The small ribosomal subunit (SSU) binds messenger RNAs (mRNAs) and translates the encoded message by selecting cognate aminoacyl-transfer RNA (tRNA) molecules. The large subunit (LSU) contains the ribosomal catalytic site termed the peptidyl transferase center (PTC), which catalyzes the formation of peptide bonds, thereby polymerizing the amino acids delivered by tRNAs into a polypeptide chain. The nascent polypeptides leave the ribosome through a tunnel in the LSU and interact with protein factors that function in enzymatic processing, targeting, and the membrane insertion of nascent chains at the exit of the ribosomal tunnel. The chain is Large ribosomal subunit protein eL13 (rpl13) from Schizosaccharomyces pombe (strain 972 / ATCC 24843) (Fission yeast).